The primary structure comprises 1412 residues: DNA-directed RNA polymerase subunit beta' (1412 aa).

4 residues coordinate Zn(2+): cysteine 70, cysteine 72, cysteine 85, and cysteine 88. Mg(2+) contacts are provided by aspartate 460, aspartate 462, and aspartate 464. 4 residues coordinate Zn(2+): cysteine 819, cysteine 893, cysteine 900, and cysteine 903. Positions glutamate 1393–glutamate 1412 are disordered.

Belongs to the RNA polymerase beta' chain family. As to quaternary structure, the RNAP catalytic core consists of 2 alpha, 1 beta, 1 beta' and 1 omega subunit. When a sigma factor is associated with the core the holoenzyme is formed, which can initiate transcription. Requires Mg(2+) as cofactor. It depends on Zn(2+) as a cofactor.

It carries out the reaction RNA(n) + a ribonucleoside 5'-triphosphate = RNA(n+1) + diphosphate. Functionally, DNA-dependent RNA polymerase catalyzes the transcription of DNA into RNA using the four ribonucleoside triphosphates as substrates. The sequence is that of DNA-directed RNA polymerase subunit beta' from Burkholderia pseudomallei (strain 1106a).